Reading from the N-terminus, the 301-residue chain is Probable 5-dehydro-4-deoxyglucarate dehydratase (301 aa).

Belongs to the DapA family.

The catalysed reaction is 5-dehydro-4-deoxy-D-glucarate + H(+) = 2,5-dioxopentanoate + CO2 + H2O. It functions in the pathway carbohydrate acid metabolism; D-glucarate degradation; 2,5-dioxopentanoate from D-glucarate: step 2/2. The protein is Probable 5-dehydro-4-deoxyglucarate dehydratase of Cereibacter sphaeroides (strain KD131 / KCTC 12085) (Rhodobacter sphaeroides).